Reading from the N-terminus, the 393-residue chain is MSLPLTRKDLMIVNMGPQHPSMHGVLRLIVTLDGEDVIDCEPILGYLHRGMEKIAENRTIIQYLPYVTRWDYLATMFTEAITVNAPEFLENIQIPQRASYIRVIMLELSRIASHLLWLGPFMADLGAQTPFFYIFRERELIYDLFEAATGMRMMHNYFRIGGVAADLPYGWIEKCLDFCDYFLRGVVEYQQLITQNPIFLERVERVGFISGEEAVNWGLSGPMLRASGIRWDLRKVDLYESYNQFGWKVQWQKEGDSLARYLVRIGEMRESIKIIQQAVEKIPGGPYENLEVRRFKKEKNSEWNDFEYRFLGKKPSPNFELSKQELYVRIEAPKGELGIYLVGDDGLFPWRWKIRPPGFINLQILPQLVKKMKLADIMTILGSIDIIMGEVDR.

It belongs to the complex I 49 kDa subunit family. As to quaternary structure, NDH is composed of at least 16 different subunits, 5 of which are encoded in the nucleus.

It is found in the plastid. Its subcellular location is the chloroplast thylakoid membrane. The catalysed reaction is a plastoquinone + NADH + (n+1) H(+)(in) = a plastoquinol + NAD(+) + n H(+)(out). It carries out the reaction a plastoquinone + NADPH + (n+1) H(+)(in) = a plastoquinol + NADP(+) + n H(+)(out). NDH shuttles electrons from NAD(P)H:plastoquinone, via FMN and iron-sulfur (Fe-S) centers, to quinones in the photosynthetic chain and possibly in a chloroplast respiratory chain. The immediate electron acceptor for the enzyme in this species is believed to be plastoquinone. Couples the redox reaction to proton translocation, and thus conserves the redox energy in a proton gradient. This is NAD(P)H-quinone oxidoreductase subunit H, chloroplastic from Brachypodium distachyon (Purple false brome).